We begin with the raw amino-acid sequence, 253 residues long: 3-deoxy-manno-octulosonate cytidylyltransferase (253 aa).

It belongs to the KdsB family.

Its subcellular location is the cytoplasm. It catalyses the reaction 3-deoxy-alpha-D-manno-oct-2-ulosonate + CTP = CMP-3-deoxy-beta-D-manno-octulosonate + diphosphate. The protein operates within nucleotide-sugar biosynthesis; CMP-3-deoxy-D-manno-octulosonate biosynthesis; CMP-3-deoxy-D-manno-octulosonate from 3-deoxy-D-manno-octulosonate and CTP: step 1/1. Its pathway is bacterial outer membrane biogenesis; lipopolysaccharide biosynthesis. Its function is as follows. Activates KDO (a required 8-carbon sugar) for incorporation into bacterial lipopolysaccharide in Gram-negative bacteria. The sequence is that of 3-deoxy-manno-octulosonate cytidylyltransferase from Acinetobacter baumannii (strain SDF).